Here is a 39-residue protein sequence, read N- to C-terminus: Potassium channel toxin alpha-KTx 2.5 (39 aa).

3 disulfides stabilise this stretch: Cys7–Cys29, Cys13–Cys34, and Cys17–Cys36.

This sequence belongs to the short scorpion toxin superfamily. Potassium channel inhibitor family. Alpha-KTx 02 subfamily. In terms of tissue distribution, expressed by the venom gland.

It is found in the secreted. Potent selective inhibitor of Kv1.1/KCNA1, Kv1.2/KCNA2, Kv1.3/KCNA3 voltage-gated potassium channels. Weak inhibitor of Kv1.6/KCNA6 potassium channel. It also shows a weak interaction with nicotinic acetylcholine receptors (nAChR), suggesting it may weakly inhibit it. This Centruroides limbatus (Bark scorpion) protein is Potassium channel toxin alpha-KTx 2.5.